Consider the following 723-residue polypeptide: MSQTITQGRLRIDANFKRFVDEEVLPGVELDAAAFWHNVDEIVHDLAPENRQLLAERDRIQAALDEWHRSNPGPVKDKAAYKSFLRELGYLVPQPDHVTVETTGIDSEITSQAGPQLVVPAMNARYALNAANARWGSLYDALYGSDIIPQEGAMVSGYDPQRGEQVIAWVRRFLDESLPLENGSYQDVVAFKVVDKQLRIQLKNGKETTLRTPAQFVGYRGDTAAPTCILLKNNGLHIELQIDANGRIGKDDSAHINDVIVEAAISTILDCEDSVAAVDAEDKILLYRNLLGLMQGTLQEKMEKNGRQIVRKLNDDRQYTAADGSEISLHGRSLLFIRNVGHLMTIPVIWDSEGNEIPEGILDGVMTGAIALYDLKVQKNSRTGSVYIVKPKMHGPQEVAFANKLFSRVETMLGMAPNTLKMGIMDEERRTSLNLRSCIAQARNRVAFINTGFLDRTGDEMHSVMEAGPMLRKNQMKSTPWIKAYERNNVLSGLFCGLRGKAQIGKGMWAMPDLMADMYSQKGDQLRAGANTAWVPSPTAATLHALHYHQTNVQSVQANIAQTEFNAEFEPLLDDLLTIPVAENANWSVEEIQQELDNNVQGILGYVVRWVEQGIGCSKVPDIHNVALMEDRATLRISSQHIANWLRHGILTKEQVQASLENMAKVVDQQNAGDPAYRPMAGNFANSCAFKAASDLIFLGVKQPNGYTEPLLHAWRLREKESH.

Residues V118, 125–126 (RY), S274, and R311 each bind acetyl-CoA. The active-site Proton acceptor is R338. Glyoxylate-binding positions include R338, E427, and 452–455 (GFLD). The Mg(2+) site is built by E427 and D455. P536 serves as a coordination point for acetyl-CoA. C617 carries the cysteine sulfenic acid (-SOH) modification. Residue D631 is the Proton donor of the active site. C688 is subject to Cysteine sulfenic acid (-SOH).

Belongs to the malate synthase family. GlcB subfamily. As to quaternary structure, monomer. It depends on Mg(2+) as a cofactor.

The protein localises to the cytoplasm. The catalysed reaction is glyoxylate + acetyl-CoA + H2O = (S)-malate + CoA + H(+). It functions in the pathway carbohydrate metabolism; glyoxylate cycle; (S)-malate from isocitrate: step 2/2. Functionally, involved in the glycolate utilization. Catalyzes the condensation and subsequent hydrolysis of acetyl-coenzyme A (acetyl-CoA) and glyoxylate to form malate and CoA. The polypeptide is Malate synthase G (Escherichia coli O6:H1 (strain CFT073 / ATCC 700928 / UPEC)).